A 470-amino-acid chain; its full sequence is Cannabinoid receptor type 1B (470 aa).

The Extracellular segment spans residues 1–113 (MKLALHRIAG…CFMILTPAQQ (113 aa)). N-linked (GlcNAc...) asparagine glycosylation is found at Asn-78 and Asn-86. Residues 114–139 (LVIVILAITLGTFTVLENFVVLCVIL) traverse the membrane as a helical segment. The Cytoplasmic portion of the chain corresponds to 140 to 151 (HSHTLRSRPSYH). Residues 152 to 172 (FIGSLAVADLIGSIIFVYSFL) form a helical membrane-spanning segment. Topologically, residues 173 to 184 (DFHVLHRKDSPS) are extracellular. The helical transmembrane segment at 185–209 (IFLFKLAGVIASFTASVGSLFLTAI) threads the bilayer. Topologically, residues 210–229 (DRYVSIHRPMAYKRIITKTK) are cytoplasmic. The helical transmembrane segment at 230–252 (AVIAFSVMWAISIEFSLLPLLGW) threads the bilayer. Topologically, residues 253–270 (NCKRLHSVCSDIFPLIDE) are extracellular. A helical membrane pass occupies residues 271-296 (KYLMFWIGMTTVLLLFIIYAYMFILW). Residues 297–341 (KSHHHAVRMLSRSSQRSIIVYTSEGTKVQTVRPEQARMDLRLAKT) lie on the Cytoplasmic side of the membrane. The chain crosses the membrane as a helical span at residues 342 to 362 (LVLILVALIICWGPLLAIMVY). Residues 363–374 (DLFGRVNDFIKT) are Extracellular-facing. Residues 375–396 (VFAFCSMLCLLNSTINPVIYAM) form a helical membrane-spanning segment. At 397–470 (RSKDLRRAFV…VTASSPAEAV (74 aa)) the chain is on the cytoplasmic side. Cys-412 carries the S-palmitoyl cysteine lipid modification. Residues 418 to 434 (SLDSSAESDWNSRSVRS) show a composition bias toward polar residues. The interval 418–450 (SLDSSAESDWNSRSVRSTGGRAGKDRSVGGKPQ) is disordered.

This sequence belongs to the G-protein coupled receptor 1 family. Post-translationally, palmitoylation at Cys-412 is important for recruitment at both plasma membrane and lipid rafts and association with G protein alpha subunits.

Its subcellular location is the cell membrane. The protein resides in the mitochondrion outer membrane. It localises to the cell projection. The protein localises to the axon. It is found in the presynapse. G-protein coupled receptor for cannabinoids. Mediates many cannabinoid-induced effects in the central nervous system (CNS), as well as in peripheral tissues. Regulates cellular respiration and energy production in response to cannabinoids. Signaling typically involves reduction in cyclic AMP. This chain is Cannabinoid receptor type 1B (cnr1b), found in Takifugu rubripes (Japanese pufferfish).